Consider the following 708-residue polypeptide: Otogelin-like protein (708 aa).

Residues 1-113 (KIIVNRLARK…SWEIEKSFEV (113 aa)) enclose the VWFD domain. N-linked (GlcNAc...) asparagine glycosylation is present at asparagine 553. 4 cysteine pairs are disulfide-bonded: cysteine 616–cysteine 672, cysteine 637–cysteine 686, cysteine 648–cysteine 703, and cysteine 652–cysteine 705. The CTCK domain occupies 616–708 (CKREERICQK…EPIDCTCQWN (93 aa)).

This sequence belongs to the otogelin family.

It localises to the secreted. In Pongo abelii (Sumatran orangutan), this protein is Otogelin-like protein (OTOGL).